We begin with the raw amino-acid sequence, 601 residues long: ATP-dependent lipid A-core flippase (601 aa).

A run of 5 helical transmembrane segments spans residues 33 to 53 (CVAVVAMIAYAAITPFFAKLI), 72 to 92 (VSLMLIGLSVLRGIAGFLSEY), 158 to 178 (VIGLMALMVYQNPVLSLVFLV), 255 to 275 (LGGGVIHLISVAGVAGILYVV), and 283 to 303 (TITPGSLMAFIAAMAMMLSPI). The ABC transmembrane type-1 domain maps to 34–315 (VAVVAMIAYA…LSQVVSVMQR (282 aa)). Positions 347–583 (IEYRHVSLVY…RGGYADLYAM (237 aa)) constitute an ABC transporter domain. Residue 381-388 (GQSGSGKT) coordinates ATP.

It belongs to the ABC transporter superfamily. Lipid exporter (TC 3.A.1.106) family. In terms of assembly, homodimer.

It is found in the cell inner membrane. It carries out the reaction ATP + H2O + lipid A-core oligosaccharideSide 1 = ADP + phosphate + lipid A-core oligosaccharideSide 2.. In terms of biological role, involved in lipopolysaccharide (LPS) biosynthesis. Translocates lipid A-core from the inner to the outer leaflet of the inner membrane. Transmembrane domains (TMD) form a pore in the inner membrane and the ATP-binding domain (NBD) is responsible for energy generation. This chain is ATP-dependent lipid A-core flippase, found in Methylococcus capsulatus (strain ATCC 33009 / NCIMB 11132 / Bath).